Here is a 556-residue protein sequence, read N- to C-terminus: MTMLKNPSNKYRAFPAIDIPDRTWPSKAITQAPIWLSSDLRDGNQSLIEPMDAAKKMRFFKTLVQVGLKEIEVGFPSASQTDFDFVRELIEGGHIPDDVTIQVLTQAREDLITRTFESLKGAKQAIVHYYNATAPSFRRIVFNQDKAGVIQIAVNAGRIIKRLAEQNPETNWRFEYSPEIFSSTEPEFAVEVCNAVIEVFQPTPEQKLILNLPATVEAATPNVYADQIEWFCRHIDRRDSVLVSLHTHNDRGTGVAATELGLMAGADRVEGCLFGNGERTGNVDLVTVALNMYTQGVDPQLDFSDIDAVRKVVEECNQLPVHPRHPYVGDLVHTAFSGSHQDAIRKGFSQQDPNGLWEVPYLPIDPADIGRSYEAVIRVNSQSGKGGITFLLEQEYGISLPRRMQIEFSQVVQKETDRLGLEMSAKQIYALLEAEYLQATAPYTLKGHRLQEENGTSAVDVEVAADGEVIHWRGIGKGPLEALVAALPVKLEIMDYHEHAIGAGSNAKAAAYIEVRLDGERPLHGIGIDENITTASIRALFSAMNRALHQAQEAAA.

One can recognise a Pyruvate carboxyltransferase domain in the interval Pro-33–Asp-307. Positions 42, 246, 248, and 282 each coordinate Mg(2+). The interval Ala-439–Ala-556 is regulatory domain.

This sequence belongs to the alpha-IPM synthase/homocitrate synthase family. LeuA type 2 subfamily. As to quaternary structure, homodimer. The cofactor is Mg(2+).

It is found in the cytoplasm. The enzyme catalyses 3-methyl-2-oxobutanoate + acetyl-CoA + H2O = (2S)-2-isopropylmalate + CoA + H(+). Its pathway is amino-acid biosynthesis; L-leucine biosynthesis; L-leucine from 3-methyl-2-oxobutanoate: step 1/4. In terms of biological role, catalyzes the condensation of the acetyl group of acetyl-CoA with 3-methyl-2-oxobutanoate (2-ketoisovalerate) to form 3-carboxy-3-hydroxy-4-methylpentanoate (2-isopropylmalate). The chain is 2-isopropylmalate synthase from Stutzerimonas stutzeri (strain A1501) (Pseudomonas stutzeri).